We begin with the raw amino-acid sequence, 279 residues long: Nitrate import permease protein NrtB (279 aa).

Residues 86–270 (IAASLQRVAV…LLNALVGFIA (185 aa)) form the ABC transmembrane type-1 domain. Transmembrane regions (helical) follow at residues 98 to 118 (LMAA…VLMF), 124 to 144 (IFQV…LAAF), 151 to 171 (AIFV…AVGV), 196 to 216 (VLLP…IGLS), 217 to 237 (WLAI…FFIW), and 249 to 269 (ILAI…VGFI).

This sequence belongs to the binding-protein-dependent transport system permease family. CysTW subfamily. The complex is composed of two ATP-binding proteins (NrtC and NrtD), two transmembrane proteins (NrtB) and a solute-binding protein (NrtA).

It is found in the cell inner membrane. Part of the ABC transporter complex NrtABCD involved in nitrate uptake. The complex is probably also involved in nitrite transport. Probably responsible for the translocation of the substrate across the membrane. In Leptolyngbya laminosa (Phormidium laminosum), this protein is Nitrate import permease protein NrtB.